We begin with the raw amino-acid sequence, 387 residues long: Lipid-A-disaccharide synthase (387 aa).

The protein belongs to the LpxB family.

The enzyme catalyses a lipid X + a UDP-2-N,3-O-bis[(3R)-3-hydroxyacyl]-alpha-D-glucosamine = a lipid A disaccharide + UDP + H(+). It participates in bacterial outer membrane biogenesis; LPS lipid A biosynthesis. Functionally, condensation of UDP-2,3-diacylglucosamine and 2,3-diacylglucosamine-1-phosphate to form lipid A disaccharide, a precursor of lipid A, a phosphorylated glycolipid that anchors the lipopolysaccharide to the outer membrane of the cell. This is Lipid-A-disaccharide synthase from Glaesserella parasuis serovar 5 (strain SH0165) (Haemophilus parasuis).